Consider the following 176-residue polypeptide: Thiol:disulfide interchange protein HelX (176 aa).

Residues 1-19 (MAKPLMFLPLLVMAGFVGA) form the signal peptide. One can recognise a Thioredoxin domain in the interval 35-172 (ALAGKEAPAV…ITKKIDPLLA (138 aa)). A disulfide bridge connects residues cysteine 75 and cysteine 78.

This sequence belongs to the thioredoxin family. DsbE subfamily.

It is found in the periplasm. In terms of biological role, required for disulfide bond formation in some periplasmic proteins. Also acts as a disulfide oxidoreductase in cytochromes c biogenesis. The cysteines of apocytochromes c must be in the reduced state for covalent linkage between the two moieties to occur. The chain is Thiol:disulfide interchange protein HelX (helX) from Rhodobacter capsulatus (strain ATCC BAA-309 / NBRC 16581 / SB1003).